The primary structure comprises 60 residues: Large ribosomal subunit protein uL30 (60 aa).

This sequence belongs to the universal ribosomal protein uL30 family. In terms of assembly, part of the 50S ribosomal subunit.

This Amoebophilus asiaticus (strain 5a2) protein is Large ribosomal subunit protein uL30.